The following is a 283-amino-acid chain: Putative ABC transporter ATP-binding protein MA_4342 (283 aa).

The ABC transporter domain occupies 3–238 (IILENVSFFY…KNVPLPPVTS (236 aa)). 40–47 (GEKGAGKS) lines the ATP pocket.

Belongs to the ABC transporter superfamily.

The protein localises to the cell membrane. Probably part of an ABC transporter complex. Responsible for energy coupling to the transport system. The protein is Putative ABC transporter ATP-binding protein MA_4342 of Methanosarcina acetivorans (strain ATCC 35395 / DSM 2834 / JCM 12185 / C2A).